A 65-amino-acid polypeptide reads, in one-letter code: Large ribosomal subunit protein bL35 (65 aa).

Over residues 1-11 the composition is skewed to basic residues; it reads MPKIKTRRSAA. Positions 1–25 are disordered; the sequence is MPKIKTRRSAAKRFSVTGSGKFRRR.

The protein belongs to the bacterial ribosomal protein bL35 family.

The chain is Large ribosomal subunit protein bL35 from Nitratidesulfovibrio vulgaris (strain ATCC 29579 / DSM 644 / CCUG 34227 / NCIMB 8303 / VKM B-1760 / Hildenborough) (Desulfovibrio vulgaris).